A 665-amino-acid polypeptide reads, in one-letter code: Auxin response factor 1 (665 aa).

Positions 124 to 226 form a DNA-binding region, TF-B3; sequence FCKTLTASDT…ELRVGVRRHM (103 aa). Disordered stretches follow at residues 356 to 408, 496 to 542, and 645 to 665; these read VANS…SVPL, PVPS…RQIR, and KADAEENGNTEGRSSSMAGSR. 3 stretches are compositionally biased toward polar residues: residues 497-519, 530-542, and 651-665; these read VPSNEFDSGQQSEPLNINQSDIP, LRSPQESQSRQIR, and NGNTEGRSSSMAGSR. Residues 542-635 form the PB1 domain; the sequence is RSCTKVHMQG…EVKKLSPKNK (94 aa).

The protein belongs to the ARF family. In terms of assembly, homodimers and heterodimers. Interacts with the auxin-responsive proteins IAA12, IAA13, IAA17 and with ARF2. Binds to RIN13 in the nucleus. As to expression, expressed in the whole plant.

Its subcellular location is the nucleus. The protein resides in the cytoplasm. Its function is as follows. Auxin response factors (ARFs) are transcriptional factors that bind specifically to the DNA sequence 5'-TGTCTC-3' found in the auxin-responsive promoter elements (AuxREs). Seems to act as transcriptional repressor. Formation of heterodimers with Aux/IAA proteins may alter their ability to modulate early auxin response genes expression. Promotes flowering, stamen development, floral organ abscission and fruit dehiscence. Acts as a repressor of IAA2, IAA3 and IAA7. Together with RIN13, promotes leaf senescence and cell death. This chain is Auxin response factor 1, found in Arabidopsis thaliana (Mouse-ear cress).